Consider the following 603-residue polypeptide: Elongation factor 4 (603 aa).

The tr-type G domain maps to 7–189; sequence VRIRNFCIIA…AVVERIPPPP (183 aa). GTP-binding positions include 19-24 and 136-139; these read DHGKST and NKID.

This sequence belongs to the TRAFAC class translation factor GTPase superfamily. Classic translation factor GTPase family. LepA subfamily.

Its subcellular location is the cell inner membrane. The enzyme catalyses GTP + H2O = GDP + phosphate + H(+). Functionally, required for accurate and efficient protein synthesis under certain stress conditions. May act as a fidelity factor of the translation reaction, by catalyzing a one-codon backward translocation of tRNAs on improperly translocated ribosomes. Back-translocation proceeds from a post-translocation (POST) complex to a pre-translocation (PRE) complex, thus giving elongation factor G a second chance to translocate the tRNAs correctly. Binds to ribosomes in a GTP-dependent manner. The polypeptide is Elongation factor 4 (Trichormus variabilis (strain ATCC 29413 / PCC 7937) (Anabaena variabilis)).